We begin with the raw amino-acid sequence, 174 residues long: Neuromedin-U (174 aa).

The signal sequence occupies residues 1–37 (MSRAANRRPGLSAGQLAAATASPLLSLLLLLACCADA). Residues 38–105 (CRGTPISPQR…EQTEKDNAKR (68 aa)) constitute a propeptide that is removed on maturation. A Methionine sulfoxide; partial modification is found at Met-141. Asn-166 bears the Asparagine amide mark. Positions 170-174 (STSFI) are excised as a propeptide.

This sequence belongs to the NmU family. Expressed throughout the gastrointestinal tract with highest levels in the duodenum and jejunum. Low levels in spinal cord, hypothalamus, and stomach. Neuromedin-U-23: Expressed in the small intestine and the pituitary gland (at protein level). Neuromedin precursor-related peptides: Expressed in pituitary gland and small intestine (at protein level).

Its subcellular location is the secreted. In terms of biological role, ligand for receptors NMUR1 and NMUR2. Receptor-binding is very tight if not irreversible and triggers an increase in the cytosolic Ca(2+) concentration. Stimulates muscle contractions of specific regions of the gastrointestinal tract. In rat, NMU stimulates contractions of stomach circular muscle. Functionally, does not function as a ligand for either NMUR1 or NMUR2. Indirectly induces prolactin release although its potency is much lower than that of neuromedin precursor-related peptide 36. Its function is as follows. Does not function as a ligand for either NMUR1 or NMUR2. Indirectly induces prolactin release from lactotroph cells in the pituitary gland, probably via the hypothalamic dopaminergic system. The sequence is that of Neuromedin-U (Nmu) from Rattus norvegicus (Rat).